We begin with the raw amino-acid sequence, 281 residues long: Sulfur carrier protein FdhD (281 aa).

Cys-117 acts as the Cysteine persulfide intermediate in catalysis.

This sequence belongs to the FdhD family.

It is found in the cytoplasm. Functionally, required for formate dehydrogenase (FDH) activity. Acts as a sulfur carrier protein that transfers sulfur from IscS to the molybdenum cofactor prior to its insertion into FDH. In Xanthomonas euvesicatoria pv. vesicatoria (strain 85-10) (Xanthomonas campestris pv. vesicatoria), this protein is Sulfur carrier protein FdhD.